The primary structure comprises 750 residues: Methylmalonyl-CoA mutase, mitochondrial (750 aa).

The transit peptide at 1–32 (MLRVKNQLFLLSPHYLKQVKESSGSRLIRQRF) directs the protein to the mitochondrion. Gln-50 contributes to the malonyl-CoA binding site. The residue at position 89 (Lys-89) is an N6-acetyllysine. Residues 96 to 99 (YPTM) and 106 to 110 (TIRQY) each bind malonyl-CoA. An N6-acetyllysine modification is found at Lys-212. Residues 216-218 (TIQ), Arg-228, Lys-255, His-265, and 304-306 (RLS) contribute to the malonyl-CoA site. Lys-335 carries the N6-acetyllysine modification. Lys-343 is modified (N6-succinyllysine). Phosphoserine is present on Ser-481. Lys-595 is subject to N6-succinyllysine. At Lys-602 the chain carries N6-acetyllysine. Residues 614 to 746 (RPRLLVAKMG…DDIEKCLEKK (133 aa)) form the B12-binding domain. His-627 contacts adenosylcob(III)alamin.

It belongs to the methylmalonyl-CoA mutase family. In terms of assembly, homodimer. Interacts (the apoenzyme form) with MMAA; the interaction is GTP dependent. It depends on adenosylcob(III)alamin as a cofactor.

It localises to the mitochondrion matrix. The protein resides in the mitochondrion. Its subcellular location is the cytoplasm. It carries out the reaction (R)-methylmalonyl-CoA = succinyl-CoA. Inhibited by itaconyl-CoA, a metabolite that inactivates the coenzyme B12 cofactor. Catalyzes the reversible isomerization of methylmalonyl-CoA (MMCoA) (generated from branched-chain amino acid metabolism and degradation of dietary odd chain fatty acids and cholesterol) to succinyl-CoA (3-carboxypropionyl-CoA), a key intermediate of the tricarboxylic acid cycle. This is Methylmalonyl-CoA mutase, mitochondrial (MMUT) from Macaca fascicularis (Crab-eating macaque).